The following is a 217-amino-acid chain: Large ribosomal subunit protein uL3 (217 aa).

Residues G127–A162 form a disordered region. Over residues A142–G153 the composition is skewed to low complexity.

This sequence belongs to the universal ribosomal protein uL3 family. In terms of assembly, part of the 50S ribosomal subunit. Forms a cluster with proteins L14 and L19.

One of the primary rRNA binding proteins, it binds directly near the 3'-end of the 23S rRNA, where it nucleates assembly of the 50S subunit. This is Large ribosomal subunit protein uL3 from Prochlorococcus marinus (strain AS9601).